The following is a 431-amino-acid chain: Enolase (431 aa).

Glutamine 167 lines the (2R)-2-phosphoglycerate pocket. Glutamate 209 (proton donor) is an active-site residue. Mg(2+)-binding residues include aspartate 246, glutamate 289, and aspartate 316. Positions 341, 370, 371, and 392 each coordinate (2R)-2-phosphoglycerate. Catalysis depends on lysine 341, which acts as the Proton acceptor.

Belongs to the enolase family. In terms of assembly, component of the RNA degradosome, a multiprotein complex involved in RNA processing and mRNA degradation. It depends on Mg(2+) as a cofactor.

The protein resides in the cytoplasm. The protein localises to the secreted. It is found in the cell surface. It carries out the reaction (2R)-2-phosphoglycerate = phosphoenolpyruvate + H2O. It functions in the pathway carbohydrate degradation; glycolysis; pyruvate from D-glyceraldehyde 3-phosphate: step 4/5. In terms of biological role, catalyzes the reversible conversion of 2-phosphoglycerate (2-PG) into phosphoenolpyruvate (PEP). It is essential for the degradation of carbohydrates via glycolysis. The polypeptide is Enolase (Shewanella loihica (strain ATCC BAA-1088 / PV-4)).